We begin with the raw amino-acid sequence, 167 residues long: Large ribosomal subunit protein uL15 (167 aa).

Residues 1 to 10 (MKLNQISDNP) show a composition bias toward polar residues. Positions 1-37 (MKLNQISDNPGATKDRMRVGRGIGSGKGKTAGRGVKG) are disordered. Positions 21–35 (RGIGSGKGKTAGRGV) are enriched in gly residues.

It belongs to the universal ribosomal protein uL15 family. As to quaternary structure, part of the 50S ribosomal subunit.

Binds to the 23S rRNA. The chain is Large ribosomal subunit protein uL15 from Methylobacterium radiotolerans (strain ATCC 27329 / DSM 1819 / JCM 2831 / NBRC 15690 / NCIMB 10815 / 0-1).